Consider the following 573-residue polypeptide: ATP-dependent RNA helicase RhlB (573 aa).

Residues 9 to 37 (VTFSSFDLHPALIAGLESAGFTRCTPIQA) carry the Q motif motif. Positions 40–220 (LPVALPGGDV…YEHMNEPEKL (181 aa)) constitute a Helicase ATP-binding domain. Position 53 to 60 (53 to 60 (AQTGTGKT)) interacts with ATP. The DEAD box signature appears at 166–169 (DEAD). A Helicase C-terminal domain is found at 231–393 (RVRQRIYFPS…PVTSELLTPL (163 aa)). A disordered region spans residues 391-560 (TPLPRAPRVP…KPSGSPSLLS (170 aa)). Positions 402–411 (EGEEADDDAG) are enriched in acidic residues. Basic and acidic residues predominate over residues 419 to 432 (REAREQRAAEEQRR). A compositionally biased stretch (gly residues) spans 435–450 (GRSGSGGSRSGSGGGG). Over residues 451-462 (GRREGAGADGKP) the composition is skewed to basic and acidic residues. Low complexity predominate over residues 484-499 (PVVAAAAGQAPSAGVA). Basic residues predominate over residues 505–514 (PRKRRRRRNG). The span at 541–560 (VVAKPVRAAAKPSGSPSLLS) shows a compositional bias: low complexity.

This sequence belongs to the DEAD box helicase family. RhlB subfamily. As to quaternary structure, component of the RNA degradosome, which is a multiprotein complex involved in RNA processing and mRNA degradation.

It localises to the cytoplasm. The enzyme catalyses ATP + H2O = ADP + phosphate + H(+). DEAD-box RNA helicase involved in RNA degradation. Has RNA-dependent ATPase activity and unwinds double-stranded RNA. This chain is ATP-dependent RNA helicase RhlB, found in Xanthomonas euvesicatoria pv. vesicatoria (strain 85-10) (Xanthomonas campestris pv. vesicatoria).